We begin with the raw amino-acid sequence, 342 residues long: Isopentenyl-diphosphate delta-isomerase (342 aa).

A substrate-binding site is contributed by 11–12 (RK). FMN is bound by residues S68, 69-71 (SMT), S99, and N127. A substrate-binding site is contributed by 99–101 (SMR). Substrate is bound at residue Q162. Position 163 (E163) interacts with Mg(2+). Residues K194, T224, 274 to 276 (GLK), and 295 to 296 (AG) each bind FMN.

Belongs to the IPP isomerase type 2 family. As to quaternary structure, homooctamer. Dimer of tetramers. FMN is required as a cofactor. Requires NADPH as cofactor. Mg(2+) serves as cofactor.

It localises to the cytoplasm. It catalyses the reaction isopentenyl diphosphate = dimethylallyl diphosphate. Functionally, involved in the biosynthesis of isoprenoids. Catalyzes the 1,3-allylic rearrangement of the homoallylic substrate isopentenyl (IPP) to its allylic isomer, dimethylallyl diphosphate (DMAPP). The protein is Isopentenyl-diphosphate delta-isomerase of Rickettsia africae (strain ESF-5).